The chain runs to 148 residues: Lysozyme C (148 aa).

A signal peptide spans 1–18 (MKALIILGLVLLSVTVQG). Residues 19–148 (KIFERCELAR…VSQYVEGCGV (130 aa)) enclose the C-type lysozyme domain. Intrachain disulfides connect C24/C146, C48/C134, C83/C99, and C95/C113. Catalysis depends on residues E53 and D71.

It belongs to the glycosyl hydrolase 22 family. As to quaternary structure, monomer.

It catalyses the reaction Hydrolysis of (1-&gt;4)-beta-linkages between N-acetylmuramic acid and N-acetyl-D-glucosamine residues in a peptidoglycan and between N-acetyl-D-glucosamine residues in chitodextrins.. Lysozymes have primarily a bacteriolytic function; those in tissues and body fluids are associated with the monocyte-macrophage system and enhance the activity of immunoagents. This is Lysozyme C (LYZ) from Colobus angolensis (Angolan colobus).